Reading from the N-terminus, the 181-residue chain is UPF0302 protein lin2035 (181 aa).

The protein belongs to the UPF0302 family.

The chain is UPF0302 protein lin2035 from Listeria innocua serovar 6a (strain ATCC BAA-680 / CLIP 11262).